Reading from the N-terminus, the 141-residue chain is Nucleoside triphosphatase NudI (141 aa).

One can recognise a Nudix hydrolase domain in the interval 1-141; it reads MRQRTIVCPL…RHTLALKGLL (141 aa). The short motif at 38 to 59 is the Nudix box element; the sequence is GGVEPGERIEEALRREVREELG.

The protein belongs to the Nudix hydrolase family. NudI subfamily. Monomer. It depends on Mg(2+) as a cofactor.

The enzyme catalyses a ribonucleoside 5'-triphosphate + H2O = a ribonucleoside 5'-phosphate + diphosphate + H(+). It carries out the reaction a 2'-deoxyribonucleoside 5'-triphosphate + H2O = a 2'-deoxyribonucleoside 5'-phosphate + diphosphate + H(+). The catalysed reaction is dUTP + H2O = dUMP + diphosphate + H(+). It catalyses the reaction dTTP + H2O = dTMP + diphosphate + H(+). The enzyme catalyses dCTP + H2O = dCMP + diphosphate + H(+). Functionally, catalyzes the hydrolysis of nucleoside triphosphates, with a preference for pyrimidine deoxynucleoside triphosphates (dUTP, dTTP and dCTP). This is Nucleoside triphosphatase NudI from Salmonella agona (strain SL483).